We begin with the raw amino-acid sequence, 220 residues long: Ribosomal RNA large subunit methyltransferase E (220 aa).

G60, W62, D92, D108, and D133 together coordinate S-adenosyl-L-methionine. K173 (proton acceptor) is an active-site residue. A disordered region spans residues 198–220 (KPKASRDKSSETFILGRQLKHPR).

Belongs to the class I-like SAM-binding methyltransferase superfamily. RNA methyltransferase RlmE family.

The protein localises to the cytoplasm. The catalysed reaction is uridine(2552) in 23S rRNA + S-adenosyl-L-methionine = 2'-O-methyluridine(2552) in 23S rRNA + S-adenosyl-L-homocysteine + H(+). In terms of biological role, specifically methylates the uridine in position 2552 of 23S rRNA at the 2'-O position of the ribose in the fully assembled 50S ribosomal subunit. The sequence is that of Ribosomal RNA large subunit methyltransferase E from Burkholderia cenocepacia (strain HI2424).